The sequence spans 162 residues: Troponin C, skeletal muscle (162 aa).

An N-acetylalanine modification is found at A1. 4 consecutive EF-hand domains span residues 17–52 (EMIAEFKAAFDMFDTDGGGDISTKELGTVMRMLGQT), 53–88 (PTKEELDAIIEEVDEDGSGTIDFEEFLVMMVRQMKE), 93–128 (KSEEELAECFRIFDKNADGYIDSEELGEILRSSGES), and 129–162 (ITDEEIEELMKDGDKNNDGKIDFDEFLKMMEGVQ). Ca(2+) is bound by residues D30, D32, D36, E41, D66, D68, S70, T72, E77, D106, N108, D110, Y112, E117, D142, N144, D146, K148, and E153.

The protein belongs to the troponin C family.

Its function is as follows. Troponin is the central regulatory protein of striated muscle contraction. Tn consists of three components: Tn-I which is the inhibitor of actomyosin ATPase, Tn-T which contains the binding site for tropomyosin and Tn-C. The binding of calcium to Tn-C abolishes the inhibitory action of Tn on actin filaments. In Pelophylax lessonae (Pool frog), this protein is Troponin C, skeletal muscle.